We begin with the raw amino-acid sequence, 258 residues long: F-box/SPRY domain-containing protein 1 (258 aa).

Residues M6 to Q54 form the F-box domain. Residues F64–L256 enclose the B30.2/SPRY domain.

The protein belongs to the FBXO45/Fsn family. Component of an E3 ubiquitin ligase complex composed of hiw and Fsn.

The protein localises to the synapse. It participates in protein modification; protein ubiquitination. In terms of biological role, required in the presynaptic motoneuron to down-regulate the levels of wnd and restrain synaptic terminal growth at the neuromuscular junction (NMJ). This chain is F-box/SPRY domain-containing protein 1, found in Anopheles gambiae (African malaria mosquito).